Reading from the N-terminus, the 160-residue chain is Oocyte-secreted protein 4B (160 aa).

Positions 1 to 13 (MKTSVLLAITAMC) are cleaved as a signal peptide.

It belongs to the PLAC1 family.

The protein resides in the secreted. This Homo sapiens (Human) protein is Oocyte-secreted protein 4B.